A 608-amino-acid polypeptide reads, in one-letter code: Protein FAM151A (608 aa).

A helical membrane pass occupies residues 14–34; the sequence is WILAGSVSMTLVLAISMILGL. The disordered stretch occupies residues 588 to 608; sequence RHRPSSRTGPSYVEGFPGESR.

This sequence belongs to the menorin family.

Its subcellular location is the membrane. This Rattus norvegicus (Rat) protein is Protein FAM151A (Fam151a).